Reading from the N-terminus, the 143-residue chain is Large ribosomal subunit protein uL16 (143 aa).

It belongs to the universal ribosomal protein uL16 family. Part of the 50S ribosomal subunit.

Binds 23S rRNA and is also seen to make contacts with the A and possibly P site tRNAs. This chain is Large ribosomal subunit protein uL16, found in Tropheryma whipplei (strain TW08/27) (Whipple's bacillus).